Reading from the N-terminus, the 1055-residue chain is Endo-1,4-beta-xylanase A (1055 aa).

The N-terminal stretch at 1–29 (MRKKRRGFLNASTAVLVGILAGFLGVVLA) is a signal peptide. Positions 30–357 (ATGALGFAVR…TTSAEIKLEM (328 aa)) are a. A GH10 domain is found at 360–688 (EEEIPALKDV…KLAYWAIVAP (329 aa)). Catalysis depends on glutamate 498, which acts as the Proton donor. Glutamate 604 functions as the Nucleophile in the catalytic mechanism. CBM-cenC domains are found at residues 720-851 (PIEI…TNSQ) and 895-1040 (KSVA…PTNN).

The protein belongs to the glycosyl hydrolase 10 (cellulase F) family.

The enzyme catalyses Endohydrolysis of (1-&gt;4)-beta-D-xylosidic linkages in xylans.. This Thermotoga neapolitana protein is Endo-1,4-beta-xylanase A (xynA).